We begin with the raw amino-acid sequence, 55 residues long: Rubredoxin-2 (55 aa).

One can recognise a Rubredoxin-like domain in the interval 1–54 (MRKWQCVVCGFIYDEALGLPEEGIPAGTRWEDIPADWVCPDCGVGKIDFEMIEI). Residues Cys-6, Cys-9, Cys-39, and Cys-42 each coordinate Fe cation.

Belongs to the rubredoxin family. The cofactor is Fe(3+).

It is found in the cytoplasm. It functions in the pathway hydrocarbon metabolism; alkane degradation. In terms of biological role, involved in the hydrocarbon hydroxylating system, which transfers electrons from NADH to rubredoxin reductase and then through rubredoxin to alkane 1 monooxygenase. The chain is Rubredoxin-2 (rubA2) from Pseudomonas aeruginosa (strain ATCC 15692 / DSM 22644 / CIP 104116 / JCM 14847 / LMG 12228 / 1C / PRS 101 / PAO1).